We begin with the raw amino-acid sequence, 171 residues long: Ribosome maturation factor RimM (171 aa).

Residues 96-170 form the PRC barrel domain; the sequence is AEGEYYYHEI…LVTIHVMEGL (75 aa).

The protein belongs to the RimM family. Binds ribosomal protein uS19.

Its subcellular location is the cytoplasm. An accessory protein needed during the final step in the assembly of 30S ribosomal subunit, possibly for assembly of the head region. Essential for efficient processing of 16S rRNA. May be needed both before and after RbfA during the maturation of 16S rRNA. It has affinity for free ribosomal 30S subunits but not for 70S ribosomes. The sequence is that of Ribosome maturation factor RimM from Bacillus mycoides (strain KBAB4) (Bacillus weihenstephanensis).